Consider the following 193-residue polypeptide: Intracellular heme transport protein HutX (193 aa).

Y116 contributes to the heme binding site.

Homodimer. Interacts with HutZ.

The protein resides in the cytoplasm. Functionally, binds heme. Heme is transferred to the heme-degrading enzyme HutZ via a specific protein-protein interaction. The sequence is that of Intracellular heme transport protein HutX from Vibrio cholerae serotype O1 (strain ATCC 39315 / El Tor Inaba N16961).